A 289-amino-acid chain; its full sequence is Somatostatin-like receptor F_48D10.1 (289 aa).

Over 1–57 (MEPLDQTPGFPLSPEPNYWYETTPSLLLVSYPHLLDISSNQSTQSVPFQGSSALLTA) the chain is Extracellular. N-linked (GlcNAc...) asparagine glycosylation occurs at asparagine 40. The helical transmembrane segment at 58 to 79 (VIYITVFVVGLTGNTLAIYVVL) threads the bilayer. The Cytoplasmic portion of the chain corresponds to 80–89 (RYAGMKTVTN). The chain crosses the membrane as a helical span at residues 90 to 110 (IYILNLAVADELYIVGLPFLA). Topologically, residues 111 to 126 (TQNVLSYWPFGSFLCR) are extracellular. A disulfide bridge links cysteine 125 with cysteine 221. Residues 127–148 (VVMTADSMNQFTSIFCLTVMSI) form a helical membrane-spanning segment. Residues 149–170 (DRYLAVVHPIRSTKWRHPRVAK) are Cytoplasmic-facing. The chain crosses the membrane as a helical span at residues 171 to 191 (VVSAAVWAVSFVVVLPVVIFS). Topologically, residues 192–240 (DVQVRPSRPLQVGTSSKCLVKRVQETFNSCNMIWPEPKNVWSTAFILYT) are extracellular. The chain crosses the membrane as a helical span at residues 241–261 (AMVGFFGPLLIICLCYLLIVI). The Cytoplasmic portion of the chain corresponds to 262-289 (KVRHRMSAAQVGAVVSTCPLNICCLSRR).

The protein belongs to the G-protein coupled receptor 1 family.

The protein localises to the cell membrane. This Takifugu rubripes (Japanese pufferfish) protein is Somatostatin-like receptor F_48D10.1.